An 860-amino-acid polypeptide reads, in one-letter code: Spindle and centriole-associated protein 1 (860 aa).

Disordered regions lie at residues 127-150, 172-201, 230-250, and 294-332; these read RKRT…GINQ, DDAG…HSNR, ATQS…AEDQ, and PLLA…TGSS. Polar residues-rich tracts occupy residues 139–150, 190–200, and 230–245; these read PDSSQSHTGINQ, ELPNSLSQHSN, and ATQS…SSEL. Residue Thr-236 is modified to Phosphothreonine. Ser-240 carries the phosphoserine modification. The span at 317–329 shows a compositional bias: low complexity; it reads SSSTASADRPSST. The stretch at 383–439 forms a coiled coil; sequence RYLKESEIQLRKEVETRQQLEQMLGDHRELIDALTAEILSLREENSTMQARLQQYMV. The segment at 623-645 is disordered; that stretch reads PAFVSLSQPPCSSLPSTQQPRNP. Residues 627 to 642 show a composition bias toward low complexity; the sequence is SLSQPPCSSLPSTQQP. Ser-648 bears the Phosphoserine mark. The disordered stretch occupies residues 693–718; the sequence is ITSSGGEQGDGLREPRKQGSASEVST. A coiled-coil region spans residues 729 to 757; it reads SSMEERIAELNRQSMEARSKLLQLIEQQK. Ser-765, Ser-766, Ser-769, and Ser-824 each carry phosphoserine. The segment at 792-860 is disordered; that stretch reads GMEASESSKC…GWFALSAHIP (69 aa). A compositionally biased stretch (low complexity) spans 804–824; the sequence is VSPVSGNSSRRSSGAISNSCS.

As to quaternary structure, interacts with CEP120.

It is found in the cytoplasm. It localises to the cytoskeleton. Its subcellular location is the microtubule organizing center. The protein resides in the centrosome. The protein localises to the centriole. It is found in the spindle. In terms of biological role, regulator required for centriole duplication, for proper bipolar spindle formation and chromosome congression in mitosis. The chain is Spindle and centriole-associated protein 1 (Spice1) from Mus musculus (Mouse).